The primary structure comprises 333 residues: D-fructose 1,6-bisphosphatase class 2/sedoheptulose 1,7-bisphosphatase (333 aa).

Positions 33, 57, 85, and 88 each coordinate Mn(2+). Substrate contacts are provided by residues 88–90 (EGT), Tyr-119, 164–166 (RTR), and 186–188 (DGD). Glu-213 serves as a coordination point for Mn(2+).

The protein belongs to the FBPase class 2 family. In terms of assembly, homotetramer. Mn(2+) serves as cofactor.

It carries out the reaction beta-D-fructose 1,6-bisphosphate + H2O = beta-D-fructose 6-phosphate + phosphate. The enzyme catalyses D-sedoheptulose 1,7-bisphosphate + H2O = D-sedoheptulose 7-phosphate + phosphate. Its pathway is carbohydrate biosynthesis; Calvin cycle. Catalyzes the hydrolysis of fructose 1,6-bisphosphate (Fru 1,6-P2) and sedoheptulose 1,7-bisphosphate (Sed 1,7-P2) to fructose 6-phosphate and sedoheptulose 7-phosphate, respectively. This Prochlorococcus marinus (strain MIT 9312) protein is D-fructose 1,6-bisphosphatase class 2/sedoheptulose 1,7-bisphosphatase.